The sequence spans 113 residues: uncharacterized protein (113 aa).

To H.influenzae HI_1053 and P.denitrificans COX locus Uncharacterized protein 4.

This is an uncharacterized protein from Cupriavidus necator (strain ATCC 17699 / DSM 428 / KCTC 22496 / NCIMB 10442 / H16 / Stanier 337) (Ralstonia eutropha).